Here is a 126-residue protein sequence, read N- to C-terminus: uncharacterized protein (126 aa).

The disordered stretch occupies residues 13–45 (VAPKAGREEEQPPPPAGLGCGARGEPGRGPLEH).

The protein localises to the cytoplasm. It localises to the cytoskeleton. It is found in the cilium basal body. This is an uncharacterized protein from Homo sapiens (Human).